Here is a 504-residue protein sequence, read N- to C-terminus: Paired zinc finger protein 1 (504 aa).

2 consecutive C2H2-type zinc fingers follow at residues 12–35 (LLCG…RQRH) and 39–62 (HMCL…KNKH). The segment at 68-91 (FICVCCNWSFGTEIYLKCHEECMK) adopts a C2H2-type 3; degenerate zinc-finger fold. Disordered stretches follow at residues 115–136 (ALNT…SPVP) and 154–173 (IESA…LVSG). The segment covering 159 to 172 (RSSASTSTPRTLVS) has biased composition (polar residues). 2 C2H2-type zinc fingers span residues 179–202 (IPCG…RRFH) and 206–229 (HTCL…KSQH). Residues 235–258 (YNCLCCNWTFLNQVHLISHKTCLK) form a C2H2-type 6; degenerate zinc finger. The C2H2-type 7 zinc-finger motif lies at 309–332 (LSCKSCGKFFYSERSLSKHHRQIH). A C2H2-type 8; degenerate zinc finger spans residues 365-389 (FNCRCCNWSFATRRCLMSHVECLKK).

In terms of tissue distribution, expressed in proximal gonad.

Its function is as follows. Possible transcriptional regulator. Involved in promoting segregation of chromosomes during meiosis, perhaps acting downstream of the let-60 RAS / mpk-1 MAPK signaling pathway. This Caenorhabditis elegans protein is Paired zinc finger protein 1.